Consider the following 1685-residue polypeptide: Collagen alpha-5(IV) chain (1685 aa).

An N-terminal signal peptide occupies residues 1–26 (MKLRGVSLAAGLFLLALSLWGQPAEA). Residues 27 to 41 (AACYGCSPGSKCDCS) are nonhelical region (NC2). Residues 42–1456 (GIKGEKGERG…QGPPGPPGTS (1415 aa)) are triple-helical region. The segment at 49 to 1459 (ERGFPGLEGH…PGPPGTSSVA (1411 aa)) is disordered. A compositionally biased stretch (low complexity) spans 52-61 (FPGLEGHPGL). Residues 62–73 (PGFPGPEGPPGP) are compositionally biased toward pro residues. N-linked (GlcNAc...) asparagine glycosylation is present at Asn-125. Residues 188-212 (TGIPGPIGPPGPPGLMGPPGPPGLP) show a composition bias toward pro residues. Residues 214 to 225 (PKGNMGLNFQGP) show a composition bias toward low complexity. Residues 246 to 257 (EQKRPIDVEFQK) are compositionally biased toward basic and acidic residues. Pro residues predominate over residues 266-281 (RGPPGPPGIRGPPGPP). 2 stretches are compositionally biased toward basic and acidic residues: residues 284–305 (EKGE…KDGE) and 324–333 (PGRDGEKGQK). A compositionally biased stretch (low complexity) spans 413-430 (PPGISIPGPPGLDGQPGA). Composition is skewed to pro residues over residues 431–445 (PGLP…PHIP), 493–505 (PGQP…PGPP), 620–630 (MGPPGFGPPGP), and 709–727 (PGPP…PGAP). Low complexity predominate over residues 788–797 (RTGLDGLPGP). Composition is skewed to pro residues over residues 848–859 (PGPPGLDVPGPP) and 868–880 (PGAP…PGSP). Low complexity-rich tracts occupy residues 882-901 (LPGK…MGMM), 912-931 (IPGR…QGQP), 983-999 (YQGL…SGQP), 1010-1026 (NPGL…PGLK), and 1111-1120 (TPGAKGQPGL). Positions 1139 to 1148 (PGNPGLPGEP) are enriched in pro residues. 2 stretches are compositionally biased toward gly residues: residues 1149–1158 (GPVGGGGHPG) and 1202–1211 (GQKGDGGLPG). Pro residues-rich tracts occupy residues 1234-1243 (QGPPGPPGSP) and 1256-1274 (PQGP…PPGL). Residues 1295–1308 (LPGLKGDQGPPGLQ) show a composition bias toward low complexity. Residues 1353 to 1362 (IGPPGPPGLP) show a composition bias toward pro residues. The Collagen IV NC1 domain occupies 1461 to 1685 (GFLITRHSQT…SRCQVCMKRT (225 aa)). 6 disulfides stabilise this stretch: Cys-1476–Cys-1567, Cys-1509–Cys-1564, Cys-1521–Cys-1527, Cys-1586–Cys-1681, Cys-1620–Cys-1678, and Cys-1632–Cys-1638. Met-1549 participates in a covalent cross-link: S-Lysyl-methionine sulfilimine (Met-Lys) (interchain with K-1667). Lys-1667 is covalently cross-linked (S-Lysyl-methionine sulfilimine (Lys-Met) (interchain with M-1549)).

It belongs to the type IV collagen family. There are six type IV collagen isoforms, alpha 1(IV)-alpha 6(IV), each of which can form a triple helix structure with 2 other chains to generate type IV collagen network. In terms of processing, prolines at the third position of the tripeptide repeating unit (G-X-Y) are hydroxylated in some or all of the chains. Type IV collagens contain numerous cysteine residues which are involved in inter- and intramolecular disulfide bonding. 12 of these, located in the NC1 domain, are conserved in all known type IV collagens. Post-translationally, the trimeric structure of the NC1 domains is stabilized by covalent bonds between Lys and Met residues. Isoform 2 is found in kidney.

It is found in the secreted. Its subcellular location is the extracellular space. The protein localises to the extracellular matrix. It localises to the basement membrane. In terms of biological role, type IV collagen is the major structural component of glomerular basement membranes (GBM), forming a 'chicken-wire' meshwork together with laminins, proteoglycans and entactin/nidogen. The protein is Collagen alpha-5(IV) chain (COL4A5) of Homo sapiens (Human).